Consider the following 362-residue polypeptide: Alanine racemase (362 aa).

Lys35 acts as the Proton acceptor; specific for D-alanine in catalysis. At Lys35 the chain carries N6-(pyridoxal phosphate)lysine. Arg130 contributes to the substrate binding site. Tyr257 (proton acceptor; specific for L-alanine) is an active-site residue. Met305 provides a ligand contact to substrate.

It belongs to the alanine racemase family. It depends on pyridoxal 5'-phosphate as a cofactor.

It catalyses the reaction L-alanine = D-alanine. The protein operates within amino-acid biosynthesis; D-alanine biosynthesis; D-alanine from L-alanine: step 1/1. Its function is as follows. Catalyzes the interconversion of L-alanine and D-alanine. May also act on other amino acids. The sequence is that of Alanine racemase (alr) from Nitrosomonas europaea (strain ATCC 19718 / CIP 103999 / KCTC 2705 / NBRC 14298).